A 393-amino-acid polypeptide reads, in one-letter code: NAD(P)H-quinone oxidoreductase subunit H 1 (393 aa).

It belongs to the complex I 49 kDa subunit family. In terms of assembly, NDH-1 can be composed of about 15 different subunits; different subcomplexes with different compositions have been identified which probably have different functions.

It localises to the cell inner membrane. The catalysed reaction is a plastoquinone + NADH + (n+1) H(+)(in) = a plastoquinol + NAD(+) + n H(+)(out). The enzyme catalyses a plastoquinone + NADPH + (n+1) H(+)(in) = a plastoquinol + NADP(+) + n H(+)(out). Functionally, NDH-1 shuttles electrons from an unknown electron donor, via FMN and iron-sulfur (Fe-S) centers, to quinones in the respiratory and/or the photosynthetic chain. The immediate electron acceptor for the enzyme in this species is believed to be plastoquinone. Couples the redox reaction to proton translocation, and thus conserves the redox energy in a proton gradient. Cyanobacterial NDH-1 also plays a role in inorganic carbon-concentration. This chain is NAD(P)H-quinone oxidoreductase subunit H 1, found in Gloeobacter violaceus (strain ATCC 29082 / PCC 7421).